The following is a 148-amino-acid chain: 3-hydroxyacyl-[acyl-carrier-protein] dehydratase FabZ (148 aa).

Residue H55 is part of the active site.

It belongs to the thioester dehydratase family. FabZ subfamily.

It is found in the cytoplasm. It carries out the reaction a (3R)-hydroxyacyl-[ACP] = a (2E)-enoyl-[ACP] + H2O. Involved in unsaturated fatty acids biosynthesis. Catalyzes the dehydration of short chain beta-hydroxyacyl-ACPs and long chain saturated and unsaturated beta-hydroxyacyl-ACPs. The protein is 3-hydroxyacyl-[acyl-carrier-protein] dehydratase FabZ of Haemophilus influenzae (strain 86-028NP).